Consider the following 359-residue polypeptide: Phosphate acyltransferase (359 aa).

This sequence belongs to the PlsX family. Homodimer. Probably interacts with PlsY.

The protein localises to the cytoplasm. The enzyme catalyses a fatty acyl-[ACP] + phosphate = an acyl phosphate + holo-[ACP]. Its pathway is lipid metabolism; phospholipid metabolism. Functionally, catalyzes the reversible formation of acyl-phosphate (acyl-PO(4)) from acyl-[acyl-carrier-protein] (acyl-ACP). This enzyme utilizes acyl-ACP as fatty acyl donor, but not acyl-CoA. The sequence is that of Phosphate acyltransferase from Citrobacter koseri (strain ATCC BAA-895 / CDC 4225-83 / SGSC4696).